The sequence spans 80 residues: Large ribosomal subunit protein eL20 (80 aa).

The protein belongs to the eukaryotic ribosomal protein eL20 family. In terms of assembly, part of the 50S ribosomal subunit. Binds 23S rRNA.

In Methanopyrus kandleri (strain AV19 / DSM 6324 / JCM 9639 / NBRC 100938), this protein is Large ribosomal subunit protein eL20.